The sequence spans 573 residues: Sulfite reductase [NADPH] hemoprotein beta-component (573 aa).

4 residues coordinate [4Fe-4S] cluster: Cys-438, Cys-444, Cys-483, and Cys-487. Position 487 (Cys-487) interacts with siroheme.

Belongs to the nitrite and sulfite reductase 4Fe-4S domain family. In terms of assembly, alpha(8)-beta(8). The alpha component is a flavoprotein, the beta component is a hemoprotein. It depends on siroheme as a cofactor. [4Fe-4S] cluster is required as a cofactor.

It catalyses the reaction hydrogen sulfide + 3 NADP(+) + 3 H2O = sulfite + 3 NADPH + 4 H(+). It functions in the pathway sulfur metabolism; hydrogen sulfide biosynthesis; hydrogen sulfide from sulfite (NADPH route): step 1/1. Its function is as follows. Component of the sulfite reductase complex that catalyzes the 6-electron reduction of sulfite to sulfide. This is one of several activities required for the biosynthesis of L-cysteine from sulfate. The sequence is that of Sulfite reductase [NADPH] hemoprotein beta-component from Shouchella clausii (strain KSM-K16) (Alkalihalobacillus clausii).